We begin with the raw amino-acid sequence, 229 residues long: Cytochrome c oxidase subunit 2 (229 aa).

The Mitochondrial intermembrane segment spans residues 1 to 26; the sequence is MATWSNLGLQDSASPLMEQLNFFHDH. The helical transmembrane segment at 27–48 threads the bilayer; the sequence is TLLILIMITILVGYLMLMLFFN. At 49 to 62 the chain is on the mitochondrial matrix side; it reads KFTNRFLLHGQTIE. A helical membrane pass occupies residues 63 to 82; that stretch reads IIWTILPAIVLMFIALPSLR. Residues 83–229 are Mitochondrial intermembrane-facing; that stretch reads ILYLLDEINS…IKWITAMNSN (147 aa). H161, C196, E198, C200, H204, and M207 together coordinate Cu cation. A Mg(2+)-binding site is contributed by E198.

It belongs to the cytochrome c oxidase subunit 2 family. Component of the cytochrome c oxidase (complex IV, CIV), a multisubunit enzyme composed of a catalytic core of 3 subunits and several supernumerary subunits. The complex exists as a monomer or a dimer and forms supercomplexes (SCs) in the inner mitochondrial membrane with ubiquinol-cytochrome c oxidoreductase (cytochrome b-c1 complex, complex III, CIII). Cu cation serves as cofactor.

The protein localises to the mitochondrion inner membrane. It catalyses the reaction 4 Fe(II)-[cytochrome c] + O2 + 8 H(+)(in) = 4 Fe(III)-[cytochrome c] + 2 H2O + 4 H(+)(out). Its function is as follows. Component of the cytochrome c oxidase, the last enzyme in the mitochondrial electron transport chain which drives oxidative phosphorylation. The respiratory chain contains 3 multisubunit complexes succinate dehydrogenase (complex II, CII), ubiquinol-cytochrome c oxidoreductase (cytochrome b-c1 complex, complex III, CIII) and cytochrome c oxidase (complex IV, CIV), that cooperate to transfer electrons derived from NADH and succinate to molecular oxygen, creating an electrochemical gradient over the inner membrane that drives transmembrane transport and the ATP synthase. Cytochrome c oxidase is the component of the respiratory chain that catalyzes the reduction of oxygen to water. Electrons originating from reduced cytochrome c in the intermembrane space (IMS) are transferred via the dinuclear copper A center (CU(A)) of subunit 2 and heme A of subunit 1 to the active site in subunit 1, a binuclear center (BNC) formed by heme A3 and copper B (CU(B)). The BNC reduces molecular oxygen to 2 water molecules using 4 electrons from cytochrome c in the IMS and 4 protons from the mitochondrial matrix. The polypeptide is Cytochrome c oxidase subunit 2 (COII) (Simulium vittatum (Striped black fly)).